Consider the following 265-residue polypeptide: Glutamate racemase (265 aa).

Residues 9 to 10 (DS) and 41 to 42 (YS) contribute to the substrate site. Catalysis depends on C73, which acts as the Proton donor/acceptor. 74 to 75 (NT) contributes to the substrate binding site. Catalysis depends on C184, which acts as the Proton donor/acceptor. 185-186 (TH) is a binding site for substrate.

Belongs to the aspartate/glutamate racemases family.

It carries out the reaction L-glutamate = D-glutamate. The protein operates within cell wall biogenesis; peptidoglycan biosynthesis. Its function is as follows. Provides the (R)-glutamate required for cell wall biosynthesis. The sequence is that of Glutamate racemase from Actinobacillus pleuropneumoniae serotype 3 (strain JL03).